The sequence spans 301 residues: Probable 2-(5''-triphosphoribosyl)-3'-dephosphocoenzyme-A synthase (301 aa).

It belongs to the CitG/MdcB family.

It carries out the reaction 3'-dephospho-CoA + ATP = 2'-(5''-triphospho-alpha-D-ribosyl)-3'-dephospho-CoA + adenine. The chain is Probable 2-(5''-triphosphoribosyl)-3'-dephosphocoenzyme-A synthase from Pectobacterium carotovorum subsp. carotovorum (strain PC1).